A 304-amino-acid polypeptide reads, in one-letter code: tRNA-5-methyluridine(54) 2-sulfurtransferase (304 aa).

The Zn(2+) site is built by Cys-3, Cys-6, Cys-22, and His-25. Residues Ala-53 and Ile-79 each contribute to the ATP site. Residues Cys-131 and Cys-134 each contribute to the [4Fe-4S] cluster site. ATP-binding residues include Arg-138 and Gly-157. Position 224 (Cys-224) interacts with [4Fe-4S] cluster. 4 residues coordinate Zn(2+): Cys-274, Cys-277, Cys-286, and Cys-289.

It belongs to the TtcA family. TtuA subfamily. In terms of assembly, homodimer. It depends on [4Fe-4S] cluster as a cofactor. The cofactor is Mg(2+).

It catalyses the reaction 5-methyluridine(54) in tRNA + hydrogen sulfide + ATP = 5-methyl-2-thiouridine(54) in tRNA + AMP + diphosphate. It participates in tRNA modification. Its function is as follows. Catalyzes the ATP-dependent 2-thiolation of 5-methyluridine residue at position 54 in the T loop of tRNAs, leading to 5-methyl-2-thiouridine (m(5)s(2)U or s(2)T). This modification allows thermal stabilization of tRNAs in thermophilic microorganisms, and is required for cell growth at high temperatures. Can use free sulfide as sulfur source in vitro. In Thermotoga maritima (strain ATCC 43589 / DSM 3109 / JCM 10099 / NBRC 100826 / MSB8), this protein is tRNA-5-methyluridine(54) 2-sulfurtransferase.